A 413-amino-acid chain; its full sequence is MKSYLVGGAVRDALLGLPVKDRDWVVVGATPQQMLDAGYQQVGRDFPVFLHPQSREEYALARTERKSGAGYTGFTCYAAPDVTLEADLLRRDLTVNALAQDADGAIIDPYGGQNDLRKRLLRHVSPAFSEDPLRVLRVARFAARYAHLGFRIAEETQALMAAIVEAGELAHLTPERVWKETESALTTRNPQVFFQTLRDCQALKVLFPEIDALYGVPAPAKWHPEIDTGLHTLMTVTMAAMLSPDVDVRFATLCHDLGKGLTPKALWPRHHGHGPAGVKLVEQLCARLRVPNDIRDLAKLVAEYHDLIHTLPILQPKTLVKLFDSIDAWRKPQRVQQIALTSEADVRGRTGFEASDYPQGRLLLEAWEVAQSVSTKEVVAAGFKGAEIREELTRRRIAAVAQWKEQRCPQPQG.

The ATP site is built by Gly-8 and Arg-11. CTP contacts are provided by Gly-8 and Arg-11. Mg(2+) is bound by residues Asp-21 and Asp-23. Positions 91, 137, and 140 each coordinate ATP. Residues Arg-91, Arg-137, and Arg-140 each contribute to the CTP site. One can recognise an HD domain in the interval 228–329 (TGLHTLMTVT…VKLFDSIDAW (102 aa)).

It belongs to the tRNA nucleotidyltransferase/poly(A) polymerase family. Bacterial CCA-adding enzyme type 1 subfamily. As to quaternary structure, monomer. Can also form homodimers and oligomers. The cofactor is Mg(2+). Requires Ni(2+) as cofactor.

It carries out the reaction a tRNA precursor + 2 CTP + ATP = a tRNA with a 3' CCA end + 3 diphosphate. The catalysed reaction is a tRNA with a 3' CCA end + 2 CTP + ATP = a tRNA with a 3' CCACCA end + 3 diphosphate. Functionally, catalyzes the addition and repair of the essential 3'-terminal CCA sequence in tRNAs without using a nucleic acid template. Adds these three nucleotides in the order of C, C, and A to the tRNA nucleotide-73, using CTP and ATP as substrates and producing inorganic pyrophosphate. tRNA 3'-terminal CCA addition is required both for tRNA processing and repair. Also involved in tRNA surveillance by mediating tandem CCA addition to generate a CCACCA at the 3' terminus of unstable tRNAs. While stable tRNAs receive only 3'-terminal CCA, unstable tRNAs are marked with CCACCA and rapidly degraded. This Klebsiella pneumoniae subsp. pneumoniae (strain ATCC 700721 / MGH 78578) protein is Multifunctional CCA protein.